The chain runs to 104 residues: L-rhamnose mutarotase (104 aa).

Tyrosine 18 lines the substrate pocket. The active-site Proton donor is histidine 22. Substrate-binding positions include tyrosine 41 and 76-77 (WW).

It belongs to the rhamnose mutarotase family. As to quaternary structure, homodimer.

It is found in the cytoplasm. The catalysed reaction is alpha-L-rhamnose = beta-L-rhamnose. Its pathway is carbohydrate metabolism; L-rhamnose metabolism. In terms of biological role, involved in the anomeric conversion of L-rhamnose. This chain is L-rhamnose mutarotase, found in Oceanobacillus iheyensis (strain DSM 14371 / CIP 107618 / JCM 11309 / KCTC 3954 / HTE831).